The chain runs to 170 residues: Peptide deformylase (170 aa).

Residues Cys91 and His133 each contribute to the Fe cation site. Glu134 is a catalytic residue. His137 provides a ligand contact to Fe cation.

The protein belongs to the polypeptide deformylase family. Fe(2+) is required as a cofactor.

The enzyme catalyses N-terminal N-formyl-L-methionyl-[peptide] + H2O = N-terminal L-methionyl-[peptide] + formate. In terms of biological role, removes the formyl group from the N-terminal Met of newly synthesized proteins. Requires at least a dipeptide for an efficient rate of reaction. N-terminal L-methionine is a prerequisite for activity but the enzyme has broad specificity at other positions. This Glaesserella parasuis serovar 5 (strain SH0165) (Haemophilus parasuis) protein is Peptide deformylase.